The primary structure comprises 324 residues: Homocysteine S-methyltransferase 1 (324 aa).

The Hcy-binding domain maps to 6 to 320 (IKELIVEHPG…KDIAEIASAV (315 aa)). The Zn(2+) site is built by Cys238, Cys305, and Cys306.

Requires Zn(2+) as cofactor.

It is found in the cytoplasm. The enzyme catalyses S-methyl-L-methionine + L-homocysteine = 2 L-methionine + H(+). In terms of biological role, homocysteine S-methyltransferase involved in the conversion of S-adenosylmethionine (AdoMet) to methionine to control the methionine/AdoMet ratio. Also converts S-methylmethionine (SMM) to methionine. The chain is Homocysteine S-methyltransferase 1 (MHT1) from Saccharomyces cerevisiae (strain ATCC 204508 / S288c) (Baker's yeast).